A 215-amino-acid chain; its full sequence is Adenylate kinase (215 aa).

10 to 15 (GAGKGT) is a binding site for ATP. Residues 30–59 (STGDILRANVREGTELGLAAKAYMDKGELV) are NMP. AMP contacts are provided by residues Thr-31, Arg-36, 57 to 59 (ELV), 85 to 88 (GYPR), and Gln-92. The interval 126–162 (GRLMCKCGASYHTIANPPKKDNICDICGGEVYQRDDD) is LID. Arg-127 is a binding site for ATP. Zn(2+) contacts are provided by Cys-130 and Cys-132. Residue 135 to 136 (SY) participates in ATP binding. The Zn(2+) site is built by Cys-149 and Cys-152. AMP-binding residues include Arg-159 and Arg-170. An ATP-binding site is contributed by Lys-198.

Belongs to the adenylate kinase family. As to quaternary structure, monomer.

The protein resides in the cytoplasm. The catalysed reaction is AMP + ATP = 2 ADP. The protein operates within purine metabolism; AMP biosynthesis via salvage pathway; AMP from ADP: step 1/1. Catalyzes the reversible transfer of the terminal phosphate group between ATP and AMP. Plays an important role in cellular energy homeostasis and in adenine nucleotide metabolism. This chain is Adenylate kinase, found in Methanosarcina mazei (strain ATCC BAA-159 / DSM 3647 / Goe1 / Go1 / JCM 11833 / OCM 88) (Methanosarcina frisia).